We begin with the raw amino-acid sequence, 349 residues long: Guanine nucleotide-binding protein-like alpha-10 subunit (349 aa).

The G-alpha domain maps to 33–349; that stretch reads EEIRVLIYGQ…LNITYNSVKN (317 aa). Residues 36 to 49 form a G1 motif region; that stretch reads RVLIYGQKKVGVTT. Residues 168-176 are G2 motif; that stretch reads DLNFIKLTQ. The tract at residues 191-200 is G3 motif; sequence IKMIEMGIQT. Residues 195–199 and 266–269 each bind GTP; these read EMGIQ and NKKD. The segment at 262–269 is G4 motif; that stretch reads IVFFNKKD. The interval 320–325 is G5 motif; it reads NEESEV.

Belongs to the G-alpha family.

The polypeptide is Guanine nucleotide-binding protein-like alpha-10 subunit (gpaJ) (Dictyostelium discoideum (Social amoeba)).